The primary structure comprises 157 residues: SUMO-conjugating enzyme UBC9 (157 aa).

Ser2 bears the N-acetylserine mark. In terms of domain architecture, UBC core spans 4–157 (LCLQRLQEER…VLLQAKQYSK (154 aa)). The active-site Glycyl thioester intermediate is Cys93.

The protein belongs to the ubiquitin-conjugating enzyme family. In terms of assembly, interacts with SIZ1.

Its subcellular location is the nucleus. The protein operates within protein modification; protein sumoylation. In terms of biological role, E2 ubiquitin-like--protein ligase mediating SUMO/Smt3 attachment to septins and PCNA. Seems to be involved in degradation of S- (CLB5) and M-phase cyclins (CLB2). In Saccharomyces cerevisiae (strain ATCC 204508 / S288c) (Baker's yeast), this protein is SUMO-conjugating enzyme UBC9 (UBC9).